A 541-amino-acid polypeptide reads, in one-letter code: MTVFNKFARSFKSHWLLYLSVIVFGITNLVASSGAHMVQRLLFFVLTILVVKRISSLPLRLLVAAPFVLLTAADMSISLYSWCTFGTTFNDGFAISVLQSDPDEVAKMLGMYSPYLCAFAFLSLLFLAVIIKYDVSLPTKKVTGILLLIVISGSLFSACQFAYKDAKNKNAFSPYILASRFATYTPFFNLNYFALAAKEHQRLLSIANTVPYFQLSVRDTGIDTYVLIVGESVRVDNMSLYGYTRSTTPQVEAQRKQIKLFNQAISGAPYTALSVPLSLTADSVLSHDIHNYPDNIINMANQAGFQTFWLSSQSAFRQNGTAVTSIAMRAMETVYVRGFDELLLPHLSQALQQNTQQKKLIVLHLNGSHEPACSAYPQSSAVFQPQDDQDACYDNSIHYTDSLLGQVFELLKDRRASVMYFADHGLERDPTKKNVYFHGGREASQQAYHVPMFIWYSPVLGDGVDRTTENNIFSTAYNNYLINAWMGVTKPEQPQTLEEVIVHYKGDSLVVDANHDVFDYVMLRKEFTEDKQGNPTPEGQG.

Over 1–60 (MTVFNKFARSFKSHWLLYLSVIVFGITNLVASSGAHMVQRLLFFVLTILVVKRISSLPLR) the chain is Periplasmic. The helical transmembrane segment at 61 to 81 (LLVAAPFVLLTAADMSISLYS) threads the bilayer. Over 82-110 (WCTFGTTFNDGFAISVLQSDPDEVAKMLG) the chain is Cytoplasmic. Residues 111–131 (MYSPYLCAFAFLSLLFLAVII) traverse the membrane as a helical segment. The Periplasmic segment spans residues 132-141 (KYDVSLPTKK). Residues 142 to 162 (VTGILLLIVISGSLFSACQFA) traverse the membrane as a helical segment. The Cytoplasmic portion of the chain corresponds to 163-264 (YKDAKNKNAF…RKQIKLFNQA (102 aa)). Residues 265 to 285 (ISGAPYTALSVPLSLTADSVL) form a helical membrane-spanning segment. The Periplasmic portion of the chain corresponds to 286–541 (SHDIHNYPDN…QGNPTPEGQG (256 aa)).

It belongs to the phosphoethanolamine transferase family.

It localises to the cell inner membrane. Functionally, there are several lipid A forms in this strain, including a phosphoethanolamine (1-O-P-pEtN) form; overexpression of this gene does not lead to higher levels of the 1-O-P-pEtN form of lipid A. This chain is Putative transferase YhbX (yhbX), found in Escherichia coli O157:H7.